The primary structure comprises 89 residues: Small ribosomal subunit protein uS15 (89 aa).

The protein belongs to the universal ribosomal protein uS15 family. Part of the 30S ribosomal subunit. Forms a bridge to the 50S subunit in the 70S ribosome, contacting the 23S rRNA.

One of the primary rRNA binding proteins, it binds directly to 16S rRNA where it helps nucleate assembly of the platform of the 30S subunit by binding and bridging several RNA helices of the 16S rRNA. In terms of biological role, forms an intersubunit bridge (bridge B4) with the 23S rRNA of the 50S subunit in the ribosome. The chain is Small ribosomal subunit protein uS15 from Limosilactobacillus fermentum (strain NBRC 3956 / LMG 18251) (Lactobacillus fermentum).